The primary structure comprises 423 residues: Glucose-1-phosphate adenylyltransferase (423 aa).

Alpha-D-glucose 1-phosphate is bound by residues Tyr-108, Gly-173, 188 to 189 (EK), and Ser-207.

Belongs to the bacterial/plant glucose-1-phosphate adenylyltransferase family. As to quaternary structure, homotetramer.

The catalysed reaction is alpha-D-glucose 1-phosphate + ATP + H(+) = ADP-alpha-D-glucose + diphosphate. The protein operates within glycan biosynthesis; glycogen biosynthesis. In terms of biological role, involved in the biosynthesis of ADP-glucose, a building block required for the elongation reactions to produce glycogen. Catalyzes the reaction between ATP and alpha-D-glucose 1-phosphate (G1P) to produce pyrophosphate and ADP-Glc. The polypeptide is Glucose-1-phosphate adenylyltransferase (Francisella tularensis subsp. novicida (strain U112)).